The primary structure comprises 272 residues: Shikimate dehydrogenase (NADP(+)) (272 aa).

Residues 14–16 and threonine 61 each bind shikimate; that span reads SKS. The active-site Proton acceptor is lysine 65. Residue glutamate 77 coordinates NADP(+). Shikimate contacts are provided by asparagine 86 and aspartate 102. NADP(+) contacts are provided by residues 126–130, 149–154, and methionine 212; these read GAGGA and NRTADK. Tyrosine 214 is a binding site for shikimate. Glycine 237 is a binding site for NADP(+).

Belongs to the shikimate dehydrogenase family. In terms of assembly, homodimer.

It catalyses the reaction shikimate + NADP(+) = 3-dehydroshikimate + NADPH + H(+). It functions in the pathway metabolic intermediate biosynthesis; chorismate biosynthesis; chorismate from D-erythrose 4-phosphate and phosphoenolpyruvate: step 4/7. Functionally, involved in the biosynthesis of the chorismate, which leads to the biosynthesis of aromatic amino acids. Catalyzes the reversible NADPH linked reduction of 3-dehydroshikimate (DHSA) to yield shikimate (SA). This Glaesserella parasuis serovar 5 (strain SH0165) (Haemophilus parasuis) protein is Shikimate dehydrogenase (NADP(+)).